A 601-amino-acid polypeptide reads, in one-letter code: Replication protein A 70 kDa DNA-binding subunit (601 aa).

A disordered region spans residues 107 to 172 (MPGKIGDPTP…NTPGGSSKVV (66 aa)). Residues 124-135 (APSTAPAPTARP) are compositionally biased toward low complexity. Over residues 137 to 153 (QPQNGSDGSTYRPSAQS) the composition is skewed to polar residues. Positions 184-268 (WTIRARVTNK…LKNDYEMTLN (85 aa)) form a DNA-binding region, OB. Ser-370 bears the Phosphoserine mark. Residues 466–488 (CPSKDCNKKVVDQQNGMFRCEKC) form a C4-type zinc finger.

The protein belongs to the replication factor A protein 1 family. Component of the heterotrimeric canonical replication protein A complex (RPA).

Its subcellular location is the nucleus. The protein resides in the PML body. Functionally, as part of the heterotrimeric replication protein A complex (RPA/RP-A), binds and stabilizes single-stranded DNA intermediates, that form during DNA replication or upon DNA stress. It prevents their reannealing and in parallel, recruits and activates different proteins and complexes involved in DNA metabolism. Thereby, it plays an essential role both in DNA replication and the cellular response to DNA damage. This Danio rerio (Zebrafish) protein is Replication protein A 70 kDa DNA-binding subunit (rpa1).